A 362-amino-acid chain; its full sequence is UDP-3-O-acylglucosamine N-acyltransferase 1 (362 aa).

His-258 acts as the Proton acceptor in catalysis.

This sequence belongs to the transferase hexapeptide repeat family. LpxD subfamily. In terms of assembly, homotrimer.

The catalysed reaction is a UDP-3-O-[(3R)-3-hydroxyacyl]-alpha-D-glucosamine + a (3R)-hydroxyacyl-[ACP] = a UDP-2-N,3-O-bis[(3R)-3-hydroxyacyl]-alpha-D-glucosamine + holo-[ACP] + H(+). It participates in bacterial outer membrane biogenesis; LPS lipid A biosynthesis. Functionally, catalyzes the N-acylation of UDP-3-O-acylglucosamine using 3-hydroxyacyl-ACP as the acyl donor. Is involved in the biosynthesis of lipid A, a phosphorylated glycolipid that anchors the lipopolysaccharide to the outer membrane of the cell. The sequence is that of UDP-3-O-acylglucosamine N-acyltransferase 1 from Nitrobacter winogradskyi (strain ATCC 25391 / DSM 10237 / CIP 104748 / NCIMB 11846 / Nb-255).